Consider the following 1053-residue polypeptide: Ubiquitin-like modifier-activating enzyme 6 (1053 aa).

An N-acetylmethionine modification is found at Met1. Arg46 is an ATP binding site. Thr54 is subject to Phosphothreonine. Ala470 and Asp497 together coordinate ATP. Mg(2+) contacts are provided by Asp499 and Glu502. 4 residues coordinate ATP: Asn505, Arg508, Gln509, and Lys521. Lys544 carries the N6-acetyllysine modification. Position 545 (Val545) interacts with ATP. Mg(2+) is bound at residue Asp569. An ATP-binding site is contributed by Asn570. Catalysis depends on Cys625, which acts as the Glycyl thioester intermediate. Lys729 is subject to N6-acetyllysine. Ser737 bears the Phosphoserine mark.

It belongs to the ubiquitin-activating E1 family. As to quaternary structure, forms a thioester with UBD in cells stimulated with tumor necrosis factor-alpha (TNFa) and interferon-gamma (IFNg).

The enzyme catalyses ATP + ubiquitin + [E1 ubiquitin-activating enzyme]-L-cysteine = AMP + diphosphate + S-ubiquitinyl-[E1 ubiquitin-activating enzyme]-L-cysteine.. The protein operates within protein modification; protein ubiquitination. Functionally, activates ubiquitin by first adenylating its C-terminal glycine residue with ATP, and thereafter linking this residue to the side chain of a cysteine residue in E1, yielding a ubiquitin-E1 thioester and free AMP. Specific for ubiquitin, does not activate ubiquitin-like peptides. Also activates UBD/FAT10 conjugation via adenylation of its C-terminal glycine. Differs from UBE1 in its specificity for substrate E2 charging. Does not charge cell cycle E2s, such as CDC34. Essential for embryonic development. This is Ubiquitin-like modifier-activating enzyme 6 (Uba6) from Mus musculus (Mouse).